The chain runs to 340 residues: Ferrochelatase (340 aa).

Fe cation is bound by residues His189 and Glu292.

The protein belongs to the ferrochelatase family.

Its subcellular location is the cytoplasm. The catalysed reaction is heme b + 2 H(+) = protoporphyrin IX + Fe(2+). The protein operates within porphyrin-containing compound metabolism; protoheme biosynthesis; protoheme from protoporphyrin-IX: step 1/1. Its function is as follows. Catalyzes the ferrous insertion into protoporphyrin IX. The chain is Ferrochelatase from Pseudomonas syringae pv. syringae (strain B728a).